A 145-amino-acid chain; its full sequence is 3-dehydroquinate dehydratase (145 aa).

Tyrosine 23 functions as the Proton acceptor in the catalytic mechanism. Positions 74, 80, and 87 each coordinate substrate. Histidine 100 acts as the Proton donor in catalysis. Residues 101–102 (LS) and arginine 111 contribute to the substrate site.

The protein belongs to the type-II 3-dehydroquinase family. As to quaternary structure, homododecamer.

It catalyses the reaction 3-dehydroquinate = 3-dehydroshikimate + H2O. Its pathway is metabolic intermediate biosynthesis; chorismate biosynthesis; chorismate from D-erythrose 4-phosphate and phosphoenolpyruvate: step 3/7. Its function is as follows. Catalyzes a trans-dehydration via an enolate intermediate. The chain is 3-dehydroquinate dehydratase from Halalkalibacterium halodurans (strain ATCC BAA-125 / DSM 18197 / FERM 7344 / JCM 9153 / C-125) (Bacillus halodurans).